Here is a 459-residue protein sequence, read N- to C-terminus: Probable D-serine dehydratase (459 aa).

K119 carries the N6-(pyridoxal phosphate)lysine modification.

Belongs to the serine/threonine dehydratase family. DsdA subfamily. Requires pyridoxal 5'-phosphate as cofactor.

The enzyme catalyses D-serine = pyruvate + NH4(+). The chain is Probable D-serine dehydratase from Geobacillus stearothermophilus (Bacillus stearothermophilus).